The chain runs to 130 residues: Small ribosomal subunit protein uS9 (130 aa).

The protein belongs to the universal ribosomal protein uS9 family.

The polypeptide is Small ribosomal subunit protein uS9 (Bacillus licheniformis (strain ATCC 14580 / DSM 13 / JCM 2505 / CCUG 7422 / NBRC 12200 / NCIMB 9375 / NCTC 10341 / NRRL NRS-1264 / Gibson 46)).